The chain runs to 515 residues: Protein aaim-1 (515 aa).

Residues 1 to 16 (MRLLFFFSILYTASLC) form the signal peptide. Asn-46 and Asn-127 each carry an N-linked (GlcNAc...) asparagine glycan. The interval 248 to 267 (RRTDPNSKFKPRPTTSQSNG) is disordered. Asn-447 is a glycosylation site (N-linked (GlcNAc...) asparagine).

As to expression, expressed in the terminal bulb of the pharynx and the posterior of the intestine (at protein level). Expressed by intestinal cells and secreted into the intestinal lumen (at protein level).

It localises to the secreted. Plays a role in promoting resistance to bacterial pathogens such as P.aeruginosa by inhibiting bacterial intestinal colonization. Functionally, (Microbial infection) Promotes infection by microsporidian pathogens such as N.parisii in the early larval stages of development. Involved in ensuring the proper orientation and location of the spore proteins of N.parisii during intestinal cell invasion. The polypeptide is Protein aaim-1 (Caenorhabditis elegans).